A 122-amino-acid polypeptide reads, in one-letter code: Large ribosomal subunit protein uL14 (122 aa).

Belongs to the universal ribosomal protein uL14 family. As to quaternary structure, part of the 50S ribosomal subunit. Forms a cluster with proteins L3 and L19. In the 70S ribosome, L14 and L19 interact and together make contacts with the 16S rRNA in bridges B5 and B8.

In terms of biological role, binds to 23S rRNA. Forms part of two intersubunit bridges in the 70S ribosome. This chain is Large ribosomal subunit protein uL14, found in Xanthomonas axonopodis pv. citri (strain 306).